The chain runs to 229 residues: Peroxiredoxin-like 2A (229 aa).

Positions 14–112 (MWSIGAGALG…DQLGVPLYAV (99 aa)) are thioredoxin fold. Active-site redox-active residues include C85 and C88.

The protein belongs to the peroxiredoxin-like PRXL2 family. PRXL2A subfamily. In terms of tissue distribution, expressed in CSF1 and TNFSF11-stimulated CD14(+) peripheral blood mononuclear cells (PBMCs).

Its subcellular location is the cytoplasm. The protein resides in the secreted. In terms of biological role, involved in redox regulation of the cell. Acts as an antioxidant. Inhibits TNFSF11-induced NFKB1 and JUN activation and osteoclast differentiation. May affect bone resorption and help to maintain bone mass. Acts as a negative regulator of macrophage-mediated inflammation by inhibiting macrophage production of inflammatory cytokines, probably through suppression of the MAPK signaling pathway. This Homo sapiens (Human) protein is Peroxiredoxin-like 2A.